A 346-amino-acid chain; its full sequence is Peroxidase 38 (346 aa).

An N-terminal signal peptide occupies residues 1-22; sequence MHSSLIKLGFLLLLLQVSLSHA. Glutamine 23 is modified (pyrrolidone carboxylic acid). 4 disulfide bridges follow: cysteine 33-cysteine 113, cysteine 66-cysteine 71, cysteine 119-cysteine 323, and cysteine 199-cysteine 231. Histidine 64 functions as the Proton acceptor in the catalytic mechanism. The Ca(2+) site is built by aspartate 65, valine 68, glycine 70, aspartate 72, and serine 74. N-linked (GlcNAc...) asparagine glycosylation occurs at asparagine 79. Proline 161 serves as a coordination point for substrate. Histidine 192 contributes to the heme b binding site. Threonine 193 contacts Ca(2+). Asparagine 236 is a glycosylation site (N-linked (GlcNAc...) asparagine). Positions 244, 247, and 252 each coordinate Ca(2+).

Belongs to the peroxidase family. Classical plant (class III) peroxidase subfamily. Heme b serves as cofactor. The cofactor is Ca(2+).

Its subcellular location is the secreted. It is found in the vacuole. The enzyme catalyses 2 a phenolic donor + H2O2 = 2 a phenolic radical donor + 2 H2O. In terms of biological role, removal of H(2)O(2), oxidation of toxic reductants, biosynthesis and degradation of lignin, suberization, auxin catabolism, response to environmental stresses such as wounding, pathogen attack and oxidative stress. These functions might be dependent on each isozyme/isoform in each plant tissue. The chain is Peroxidase 38 (PER38) from Arabidopsis thaliana (Mouse-ear cress).